The primary structure comprises 375 residues: Ribosomal RNA large subunit methyltransferase F (375 aa).

2 disordered regions span residues Met1–Lys39 and Asn262–Thr281. Positions Ala27 to Val38 are enriched in basic residues.

This sequence belongs to the methyltransferase superfamily. METTL16/RlmF family.

The protein resides in the cytoplasm. The catalysed reaction is adenosine(1618) in 23S rRNA + S-adenosyl-L-methionine = N(6)-methyladenosine(1618) in 23S rRNA + S-adenosyl-L-homocysteine + H(+). Functionally, specifically methylates the adenine in position 1618 of 23S rRNA. The sequence is that of Ribosomal RNA large subunit methyltransferase F from Vibrio parahaemolyticus serotype O3:K6 (strain RIMD 2210633).